A 743-amino-acid polypeptide reads, in one-letter code: UV-stimulated scaffold protein A (743 aa).

The segment at 2 to 145 (DQKLSELVEV…HFLKQNKKID (144 aa)) is VHS-like. The stretch at 147–199 (QDVRSRTQAERKREEEKQRRLENIYKEKVKKATAEMEDMLEEIQSSLTEMENC) forms a coiled coil. Residues 221-310 (SDMRTKPTSQ…DDSDGDYEGS (90 aa)) are disordered. The segment covering 226 to 252 (KPTSQSPSHSKSTSQSSAYSKSTSQVS) has biased composition (low complexity). Residues 283–300 (SLGEGAKESDKSARKSDT) show a composition bias toward basic and acidic residues. The stretch at 380-411 (ESLKCAIDVKKEIEAALKKYKEMNIDCHTKER) forms a coiled coil. Disordered stretches follow at residues 413 to 482 (VMTA…NDEL) and 500 to 525 (KALP…DLSQ). Positions 417–428 (SDDDDDDDEFEE) are enriched in acidic residues. 2 stretches are compositionally biased toward basic and acidic residues: residues 429-447 (VPEK…REEY) and 510-522 (GEPK…RETD). Lys432 participates in a covalent cross-link: Glycyl lysine isopeptide (Lys-Gly) (interchain with G-Cter in ubiquitin). Residues 591-618 (KHKCLAPMPNGSLCERQDRYKCPFHGKI) form a UVSSA-type zinc finger. Positions 594, 604, 612, and 615 each coordinate Zn(2+).

The protein belongs to the UVSSA family. Monoubiquitinated at Lys-432 in response to transcription stress; this promotes efficient transfer of TFIIH to stalled RNA polymerase II.

It is found in the chromosome. Functionally, factor involved in transcription-coupled nucleotide excision repair (TC-NER), a mechanism that rapidly removes RNA polymerase II-blocking lesions from the transcribed strand of active genes. Acts as a key adapter that promotes recruitment of factors involved in TC-NER. Facilitates the ubiquitination of the elongating form of RNA polymerase II (RNA pol IIo) at DNA damage sites, thereby promoting RNA pol IIo backtracking and access by the TC-NER machinery to lesion sites. Also promotes stabilization of ERCC6/CSB by recruiting deubiquitinating enzyme USP7 to TC-NER complexes, preventing UV-induced degradation of ERCC6 by the proteasome. Mediates the recruitment of the TFIIH complex and other factors that are required for nucleotide excision repair to RNA polymerase II. Also required to inactivate stalled RNA polymerase II by blocking the access of TCEA1/TFIIS, thereby preventing reactivation of RNA polymerase II. This is UV-stimulated scaffold protein A (uvssa) from Xenopus tropicalis (Western clawed frog).